A 302-amino-acid polypeptide reads, in one-letter code: Proteasome subunit beta (302 aa).

The span at 1–10 (MAGRVREVSH) shows a compositional bias: basic and acidic residues. A disordered region spans residues 1-21 (MAGRVREVSHSSDQSGRLPAA). Residues 1 to 67 (MAGRVREVSH…GPGAGEPPHA (67 aa)) constitute a propeptide, removed in mature form; by autocatalysis. Threonine 68 (nucleophile) is an active-site residue. The disordered stretch occupies residues 283–302 (RRGNPGGNPGISAVHGDGGN).

The protein belongs to the peptidase T1B family. The 20S proteasome core is composed of 14 alpha and 14 beta subunits that assemble into four stacked heptameric rings, resulting in a barrel-shaped structure. The two inner rings, each composed of seven catalytic beta subunits, are sandwiched by two outer rings, each composed of seven alpha subunits. The catalytic chamber with the active sites is on the inside of the barrel. Has a gated structure, the ends of the cylinder being occluded by the N-termini of the alpha-subunits. Is capped by the proteasome-associated ATPase, ARC.

The protein resides in the cytoplasm. It carries out the reaction Cleavage of peptide bonds with very broad specificity.. It participates in protein degradation; proteasomal Pup-dependent pathway. The formation of the proteasomal ATPase ARC-20S proteasome complex, likely via the docking of the C-termini of ARC into the intersubunit pockets in the alpha-rings, may trigger opening of the gate for substrate entry. Interconversion between the open-gate and close-gate conformations leads to a dynamic regulation of the 20S proteasome proteolysis activity. In terms of biological role, component of the proteasome core, a large protease complex with broad specificity involved in protein degradation. This is Proteasome subunit beta from Kineococcus radiotolerans (strain ATCC BAA-149 / DSM 14245 / SRS30216).